Reading from the N-terminus, the 114-residue chain is Putative toxin HigB3 (114 aa).

Belongs to the mycobacterial HigB family.

Functionally, putative toxic component of a type II toxin-antitoxin (TA) system. Its cognate antitoxin would be HigA3. Not toxic upon expression in M.smegmatis. This Mycobacterium tuberculosis (strain ATCC 25618 / H37Rv) protein is Putative toxin HigB3.